Reading from the N-terminus, the 207-residue chain is SPRY domain-containing protein 4 (207 aa).

The B30.2/SPRY domain maps to 12–206 (CRWGAKRLGV…THSGLEVPEG (195 aa)). An N6-acetyllysine mark is found at lysine 53 and lysine 130. N6-succinyllysine is present on lysine 139.

The chain is SPRY domain-containing protein 4 (SPRYD4) from Homo sapiens (Human).